A 639-amino-acid chain; its full sequence is tRNA uridine 5-carboxymethylaminomethyl modification enzyme MnmG (639 aa).

An FAD-binding site is contributed by 15–20 (GAGHAG). 276–290 (GPRYCPSIEDKIVRF) is a binding site for NAD(+).

It belongs to the MnmG family. As to quaternary structure, homodimer. Heterotetramer of two MnmE and two MnmG subunits. Requires FAD as cofactor.

It localises to the cytoplasm. In terms of biological role, NAD-binding protein involved in the addition of a carboxymethylaminomethyl (cmnm) group at the wobble position (U34) of certain tRNAs, forming tRNA-cmnm(5)s(2)U34. The protein is tRNA uridine 5-carboxymethylaminomethyl modification enzyme MnmG of Streptococcus gordonii (strain Challis / ATCC 35105 / BCRC 15272 / CH1 / DL1 / V288).